The sequence spans 708 residues: Fatty acid oxidation complex subunit alpha (708 aa).

Residues 1-190 form an enoyl-CoA hydratase region; it reads MSQDKAFTME…KAGLVTEVVP (190 aa). Residues 310-708 form a 3-hydroxyacyl-CoA dehydrogenase region; that stretch reads DSVKRVGVLG…MLENGWNFYQ (399 aa).

The protein in the N-terminal section; belongs to the enoyl-CoA hydratase/isomerase family. In the central section; belongs to the 3-hydroxyacyl-CoA dehydrogenase family. In terms of assembly, heterotetramer of two alpha chains (FadJ) and two beta chains (FadI).

It is found in the cytoplasm. It catalyses the reaction a (3S)-3-hydroxyacyl-CoA = a (2E)-enoyl-CoA + H2O. The enzyme catalyses a 4-saturated-(3S)-3-hydroxyacyl-CoA = a (3E)-enoyl-CoA + H2O. It carries out the reaction a (3S)-3-hydroxyacyl-CoA + NAD(+) = a 3-oxoacyl-CoA + NADH + H(+). The catalysed reaction is (3S)-3-hydroxybutanoyl-CoA = (3R)-3-hydroxybutanoyl-CoA. The protein operates within lipid metabolism; fatty acid beta-oxidation. Its function is as follows. Catalyzes the formation of a hydroxyacyl-CoA by addition of water on enoyl-CoA. Also exhibits 3-hydroxyacyl-CoA epimerase and 3-hydroxyacyl-CoA dehydrogenase activities. The polypeptide is Fatty acid oxidation complex subunit alpha (Idiomarina loihiensis (strain ATCC BAA-735 / DSM 15497 / L2-TR)).